We begin with the raw amino-acid sequence, 528 residues long: Capsule biosynthesis protein CapD proenzyme (528 aa).

The first 26 residues, 1 to 26, serve as a signal peptide directing secretion; sequence MNSFKWGKKIILFCLIVSLMGGIGVS. The Nucleophile role is filled by Thr352. Residues Thr352, 429–432, and Arg520 contribute to the poly-gamma-D-glutamate site; that span reads GGNR.

This sequence belongs to the gamma-glutamyltransferase family. As to quaternary structure, this enzyme consists of two polypeptide chains, which are synthesized in precursor form from a single polypeptide. Post-translationally, cleaved by autocatalysis into a large and a small subunit.

Its pathway is capsule biogenesis; capsule polysaccharide biosynthesis. Functionally, transpeptidase that cleaves the poly-gamma-D-glutamate capsule and catalyzes the formation of an amide bond with the side-chain amino group of meso-diaminopimelic acid (m-DAP) in the peptidoglycan scaffold. Degradation of the high-molecular weight capsule (H-capsule) to the lower-molecular weight capsule (L-capsule), which is released from the bacterial cell surface. The production of L-capsule is essential to mediate escape from host defenses. The sequence is that of Capsule biosynthesis protein CapD proenzyme (capD) from Bacillus anthracis.